Consider the following 402-residue polypeptide: Beta-peptidyl aminopeptidase BapA (402 aa).

Positions 1 to 29 are cleaved as a signal peptide; it reads MTSTQRLWSGALPLLTALIVSIAATASLA. The Nucleophile role is filled by S279. Catalysis depends on proton donor/acceptor residues S317 and E319.

This sequence belongs to the peptidase S58 family. Heterooctamer of 4 heterodimers ((alpha:beta)4); each heterodimer is composed of an alpha subunit and a beta subunit processed from the same precursor. In terms of processing, autoproteolytic processing to generate the alpha and beta subunit is required for self-activation and is proposed to use a similar mechanism as substrate cleavage.

It localises to the periplasm. It carries out the reaction Cleaves N-terminal beta-homoamino acids from peptides composed of 2 to 6 amino acids.. With respect to regulation, inhibited by AEBSF (4-(2-aminoethyl)benzenesulfonyl fluoride, Pefabloc SC), ampicillin and AMP(hyd) (ampillicin-derived penicilloic acid). Its function is as follows. Beta-aminopeptidase that can cleave synthetic beta-peptides which consist of backbone-elongated beta-amino acid residues that are not processed by common proteolytic enzymes. Can cleave the beta-peptides beta-homoVal-beta-homoAla-beta-homoLeu and beta-homoAla-beta-homoLeu. Requires a beta-amino acid at the N-terminus of peptide substrates and cleaves the peptide bond between the N-terminal beta-amino acid and the amino acid at the second position of tripeptidic substrates of the general structure H-betahXaa-Ile-betahTyr-OH according to the following preferences with regard to the side chain of the N-terminal beta-amino acid: aliphatic and aromatic &gt; OH-containing &gt; hydrogen, basic and polar. The sequence is that of Beta-peptidyl aminopeptidase BapA from Sphingosinicella xenopeptidilytica.